The sequence spans 20 residues: Thylakoid lumenal 14.7 kDa protein (20 aa).

The interval 1–20 (KTGVNKPELLPKEETTVIDV) is disordered. The segment covering 9–20 (LLPKEETTVIDV) has biased composition (basic and acidic residues).

It is found in the plastid. The protein localises to the chloroplast thylakoid lumen. In Spinacia oleracea (Spinach), this protein is Thylakoid lumenal 14.7 kDa protein.